The chain runs to 456 residues: tRNA modification GTPase MnmE (456 aa).

Residues arginine 23, glutamate 85, and arginine 124 each coordinate (6S)-5-formyl-5,6,7,8-tetrahydrofolate. In terms of domain architecture, TrmE-type G spans glycine 220–valine 375. Residue asparagine 230 coordinates K(+). GTP contacts are provided by residues asparagine 230 to serine 235, threonine 249 to threonine 255, and aspartate 274 to glycine 277. Serine 234 is a binding site for Mg(2+). Residues threonine 249, isoleucine 251, and threonine 254 each contribute to the K(+) site. Threonine 255 is a Mg(2+) binding site. Lysine 456 serves as a coordination point for (6S)-5-formyl-5,6,7,8-tetrahydrofolate.

Belongs to the TRAFAC class TrmE-Era-EngA-EngB-Septin-like GTPase superfamily. TrmE GTPase family. As to quaternary structure, homodimer. Heterotetramer of two MnmE and two MnmG subunits. The cofactor is K(+).

Its subcellular location is the cytoplasm. Functionally, exhibits a very high intrinsic GTPase hydrolysis rate. Involved in the addition of a carboxymethylaminomethyl (cmnm) group at the wobble position (U34) of certain tRNAs, forming tRNA-cmnm(5)s(2)U34. This is tRNA modification GTPase MnmE from Syntrophotalea carbinolica (strain DSM 2380 / NBRC 103641 / GraBd1) (Pelobacter carbinolicus).